Consider the following 606-residue polypeptide: Endo-beta-1,4-xylanase Xyn10C (606 aa).

Positions 1 to 19 are cleaved as a signal peptide; sequence MKKIQQLLMLSLISSTLIA. A lipid anchor (N-palmitoyl cysteine) is attached at Cys20. Cys20 carries S-diacylglycerol cysteine lipidation. The disordered stretch occupies residues 23-64; it reads GGGGGSTPTTSSSPQSSSPASTPSSASSSSIISSSSLSSSLS. Over residues 29 to 64 the composition is skewed to low complexity; sequence TPTTSSSPQSSSPASTPSSASSSSIISSSSLSSSLS. The CBM15 domain maps to 91-242; it reads GNVVIEVDMA…KSVTITLAQE (152 aa). A carbohydrate contacts are provided by Asn106 and Gln171. Cys183 and Cys200 are disulfide-bonded. An a carbohydrate-binding site is contributed by Gln217. The region spanning 245–596 is the GH10 domain; it reads SANVDHLRDL…KPALRGFADA (352 aa). Substrate-binding positions include 296-299, His332, and Asn384; that span reads NIMK. Glu385 (proton donor) is an active-site residue. Glu497 acts as the Nucleophile in catalysis. Trp552 is a substrate binding site.

It belongs to the glycosyl hydrolase 10 (cellulase F) family.

It is found in the cell outer membrane. It catalyses the reaction Endohydrolysis of (1-&gt;4)-beta-D-xylosidic linkages in xylans.. It participates in glycan degradation; xylan degradation. Functionally, endo-acting xylanase which specifically cleaves internal linkages on the xylan backbone, releasing xylooligosaccharides. Is able to hydrolyze oat spelt xylan, the arabinoxylans from wheat and rye, and glucuronoxylan. Also displays very low activity against xylooligosaccharides. During the xylan degradation process, Xyn10C may act on the soluble xylans and long xylooligosaccharides products released by the secreted xylanases Xyn11A, Xyn11B and Xyn10A. This Cellvibrio japonicus (Pseudomonas fluorescens subsp. cellulosa) protein is Endo-beta-1,4-xylanase Xyn10C (xyn10C).